We begin with the raw amino-acid sequence, 185 residues long: ATP synthase subunit delta, chloroplastic (185 aa).

This sequence belongs to the ATPase delta chain family. In terms of assembly, F-type ATPases have 2 components, F(1) - the catalytic core - and F(0) - the membrane proton channel. F(1) has five subunits: alpha(3), beta(3), gamma(1), delta(1), epsilon(1). CF(0) has four main subunits: a(1), b(1), b'(1) and c(10-14). The alpha and beta chains form an alternating ring which encloses part of the gamma chain. F(1) is attached to F(0) by a central stalk formed by the gamma and epsilon chains, while a peripheral stalk is formed by the delta, b and b' chains.

Its subcellular location is the plastid. The protein localises to the chloroplast thylakoid membrane. Its function is as follows. F(1)F(0) ATP synthase produces ATP from ADP in the presence of a proton or sodium gradient. F-type ATPases consist of two structural domains, F(1) containing the extramembraneous catalytic core and F(0) containing the membrane proton channel, linked together by a central stalk and a peripheral stalk. During catalysis, ATP synthesis in the catalytic domain of F(1) is coupled via a rotary mechanism of the central stalk subunits to proton translocation. In terms of biological role, this protein is part of the stalk that links CF(0) to CF(1). It either transmits conformational changes from CF(0) to CF(1) or is implicated in proton conduction. This Gracilaria tenuistipitata var. liui (Red alga) protein is ATP synthase subunit delta, chloroplastic.